A 97-amino-acid chain; its full sequence is YcgL domain-containing protein Tcr_0238 (97 aa).

The 85-residue stretch at 3–87 (LLVSAYKSAK…SEIEKMGDMP (85 aa)) folds into the YcgL domain. The segment at 78–97 (SEIEKMGDMPPPPEHLDNIF) is disordered.

This chain is YcgL domain-containing protein Tcr_0238, found in Hydrogenovibrio crunogenus (strain DSM 25203 / XCL-2) (Thiomicrospira crunogena).